The sequence spans 70 residues: Small ribosomal subunit protein bS21B (70 aa).

This sequence belongs to the bacterial ribosomal protein bS21 family.

The chain is Small ribosomal subunit protein bS21B (rpsU2) from Rhizobium meliloti (strain 1021) (Ensifer meliloti).